Consider the following 201-residue polypeptide: Superoxide dismutase [Fe] (201 aa).

Fe cation is bound by residues His-27, His-79, Asp-161, and His-165.

This sequence belongs to the iron/manganese superoxide dismutase family. As to quaternary structure, homodimer. It depends on Fe cation as a cofactor.

The enzyme catalyses 2 superoxide + 2 H(+) = H2O2 + O2. Its function is as follows. Destroys superoxide anion radicals which are normally produced within the cells and which are toxic to biological systems. This is Superoxide dismutase [Fe] (sodB) from Synechococcus elongatus (strain ATCC 33912 / PCC 7942 / FACHB-805) (Anacystis nidulans R2).